The following is a 547-amino-acid chain: Methionine--tRNA ligase (547 aa).

The 'HIGH' region motif lies at 13–23 (PYANGPLHIGH). Positions 145, 148, 158, and 161 each coordinate Zn(2+). The 'KMSKS' region motif lies at 334 to 338 (QFSKS). K337 provides a ligand contact to ATP.

This sequence belongs to the class-I aminoacyl-tRNA synthetase family. MetG type 1 subfamily. Requires Zn(2+) as cofactor.

Its subcellular location is the cytoplasm. The catalysed reaction is tRNA(Met) + L-methionine + ATP = L-methionyl-tRNA(Met) + AMP + diphosphate. Is required not only for elongation of protein synthesis but also for the initiation of all mRNA translation through initiator tRNA(fMet) aminoacylation. This is Methionine--tRNA ligase from Thermoplasma acidophilum (strain ATCC 25905 / DSM 1728 / JCM 9062 / NBRC 15155 / AMRC-C165).